The chain runs to 158 residues: NAD(P)H-quinone oxidoreductase subunit O, chloroplastic (158 aa).

The transit peptide at 1–38 directs the protein to the chloroplast; it reads MAFSATVSQLSSLSTISSSLPISSRRLPHRSLPQFTVK. The disordered stretch occupies residues 33–70; it reads PQFTVKAEAEKEKQSTQGKSDGEASPAATKTPKTLPKK. Positions 56-70 are enriched in low complexity; it reads ASPAATKTPKTLPKK.

Belongs to the NDH complex subunit O family. In terms of assembly, part of the chloroplast NDH complex, composed of a mixture of chloroplast and nucleus encoded subunits. Component of the NDH subcomplex A, at least composed of ndhH, ndhI, ndhJ, ndhK, ndhL, ndhM, ndhN and ndhO.

It localises to the plastid. Its subcellular location is the chloroplast thylakoid membrane. The enzyme catalyses a plastoquinone + NADH + (n+1) H(+)(in) = a plastoquinol + NAD(+) + n H(+)(out). It catalyses the reaction a plastoquinone + NADPH + (n+1) H(+)(in) = a plastoquinol + NADP(+) + n H(+)(out). Functionally, NDH shuttles electrons from NAD(P)H:plastoquinone, via FMN and iron-sulfur (Fe-S) centers, to quinones in the photosynthetic chain and possibly in a chloroplast respiratory chain. The immediate electron acceptor for the enzyme in this species is believed to be plastoquinone. Couples the redox reaction to proton translocation, and thus conserves the redox energy in a proton gradient. This Arabidopsis thaliana (Mouse-ear cress) protein is NAD(P)H-quinone oxidoreductase subunit O, chloroplastic.